The following is a 212-amino-acid chain: Thymidylate kinase (212 aa).

Residue 11-18 (GPEGAGKS) coordinates ATP.

The protein belongs to the thymidylate kinase family.

It carries out the reaction dTMP + ATP = dTDP + ADP. Its function is as follows. Phosphorylation of dTMP to form dTDP in both de novo and salvage pathways of dTTP synthesis. The chain is Thymidylate kinase from Streptococcus sanguinis (strain SK36).